The following is a 283-amino-acid chain: Bifunctional protein FolD (283 aa).

NADP(+)-binding positions include 165–167 and S190; that span reads GRS.

Belongs to the tetrahydrofolate dehydrogenase/cyclohydrolase family. In terms of assembly, homodimer.

It carries out the reaction (6R)-5,10-methylene-5,6,7,8-tetrahydrofolate + NADP(+) = (6R)-5,10-methenyltetrahydrofolate + NADPH. It catalyses the reaction (6R)-5,10-methenyltetrahydrofolate + H2O = (6R)-10-formyltetrahydrofolate + H(+). The protein operates within one-carbon metabolism; tetrahydrofolate interconversion. Its function is as follows. Catalyzes the oxidation of 5,10-methylenetetrahydrofolate to 5,10-methenyltetrahydrofolate and then the hydrolysis of 5,10-methenyltetrahydrofolate to 10-formyltetrahydrofolate. The sequence is that of Bifunctional protein FolD from Variovorax paradoxus (strain S110).